Consider the following 397-residue polypeptide: Ribosomal RNA large subunit methyltransferase I (397 aa).

Positions 2–82 (TTSIYLVKGR…EVINVDFFVK (81 aa)) constitute a PUA domain.

The protein belongs to the methyltransferase superfamily. RlmI family.

Its subcellular location is the cytoplasm. The catalysed reaction is cytidine(1962) in 23S rRNA + S-adenosyl-L-methionine = 5-methylcytidine(1962) in 23S rRNA + S-adenosyl-L-homocysteine + H(+). Specifically methylates the cytosine at position 1962 (m5C1962) of 23S rRNA. The polypeptide is Ribosomal RNA large subunit methyltransferase I (Photobacterium profundum (strain SS9)).